We begin with the raw amino-acid sequence, 286 residues long: Pantothenate synthetase (286 aa).

30 to 37 (MGFLHEGH) is an ATP binding site. The Proton donor role is filled by His37. Gln61 lines the (R)-pantoate pocket. Gln61 provides a ligand contact to beta-alanine. Residue 147–150 (GLKD) participates in ATP binding. Gln153 contacts (R)-pantoate. Residues Val176 and 184–187 (KSSR) each bind ATP.

It belongs to the pantothenate synthetase family. In terms of assembly, homodimer.

The protein localises to the cytoplasm. The catalysed reaction is (R)-pantoate + beta-alanine + ATP = (R)-pantothenate + AMP + diphosphate + H(+). It participates in cofactor biosynthesis; (R)-pantothenate biosynthesis; (R)-pantothenate from (R)-pantoate and beta-alanine: step 1/1. Catalyzes the condensation of pantoate with beta-alanine in an ATP-dependent reaction via a pantoyl-adenylate intermediate. This Bacillus subtilis (strain 168) protein is Pantothenate synthetase.